An 859-amino-acid chain; its full sequence is DNA mismatch repair protein MutS (859 aa).

622–629 (GPNMGGKS) serves as a coordination point for ATP.

Belongs to the DNA mismatch repair MutS family.

In terms of biological role, this protein is involved in the repair of mismatches in DNA. It is possible that it carries out the mismatch recognition step. This protein has a weak ATPase activity. The sequence is that of DNA mismatch repair protein MutS from Coxiella burnetii (strain RSA 493 / Nine Mile phase I).